Here is a 787-residue protein sequence, read N- to C-terminus: DNA ligase (787 aa).

Residues 32 to 36 (DAEYD), 81 to 82 (SL), and E121 each bind NAD(+). Catalysis depends on K123, which acts as the N6-AMP-lysine intermediate. Residues R144, E181, K297, and K321 each coordinate NAD(+). Zn(2+)-binding residues include C415, C418, C445, and C451. One can recognise a BRCT domain in the interval 703–787 (VEGLPLAGQT…RLTELGVAVD (85 aa)).

Belongs to the NAD-dependent DNA ligase family. LigA subfamily. Mg(2+) serves as cofactor. Requires Mn(2+) as cofactor.

It catalyses the reaction NAD(+) + (deoxyribonucleotide)n-3'-hydroxyl + 5'-phospho-(deoxyribonucleotide)m = (deoxyribonucleotide)n+m + AMP + beta-nicotinamide D-nucleotide.. DNA ligase that catalyzes the formation of phosphodiester linkages between 5'-phosphoryl and 3'-hydroxyl groups in double-stranded DNA using NAD as a coenzyme and as the energy source for the reaction. It is essential for DNA replication and repair of damaged DNA. The polypeptide is DNA ligase (Pseudomonas syringae pv. tomato (strain ATCC BAA-871 / DC3000)).